Consider the following 378-residue polypeptide: Pyrimidine monooxygenase RutA (378 aa).

Residues 65–66, N131, E140, 156–157, and S206 contribute to the FMN site; these read IK and RY.

It belongs to the NtaA/SnaA/DszA monooxygenase family. RutA subfamily.

It catalyses the reaction uracil + FMNH2 + NADH + O2 = (Z)-3-ureidoacrylate + FMN + NAD(+) + H2O + H(+). It carries out the reaction thymine + FMNH2 + NADH + O2 = (Z)-2-methylureidoacrylate + FMN + NAD(+) + H2O + H(+). Catalyzes the pyrimidine ring opening between N-3 and C-4 by an unusual flavin hydroperoxide-catalyzed mechanism, adding oxygen atoms in the process to yield ureidoacrylate peracid, that immediately reacts with FMN forming ureidoacrylate and FMN-N(5)-oxide. The FMN-N(5)-oxide reacts spontaneously with NADH to produce FMN. Requires the flavin reductase RutF to regenerate FMN in vivo. The chain is Pyrimidine monooxygenase RutA from Cronobacter turicensis (strain DSM 18703 / CCUG 55852 / LMG 23827 / z3032).